The following is a 210-amino-acid chain: Glutathione S-transferase P (210 aa).

The GST N-terminal domain occupies 2 to 81 (PPYTIVYFPV…HLGRTLGLYG (80 aa)). The residue at position 4 (tyrosine 4) is a Phosphotyrosine; by EGFR. Glutathione-binding positions include tyrosine 8, arginine 14, tryptophan 39, lysine 45, and 52-53 (QL). At threonine 62 the chain carries Phosphothreonine. 65 to 66 (QS) provides a ligand contact to glutathione. A GST C-terminal domain is found at 83–204 (DQQEAALVDM…ASPEHMNRPI (122 aa)). Residues lysine 103 and lysine 116 each carry the N6-succinyllysine modification. N6-acetyllysine is present on lysine 128.

Belongs to the GST superfamily. Pi family. In terms of assembly, homodimer. Interacts with CDK5.

It is found in the cytoplasm. The protein resides in the mitochondrion. It localises to the nucleus. The enzyme catalyses RX + glutathione = an S-substituted glutathione + a halide anion + H(+). It catalyses the reaction prostaglandin J2 + glutathione = prostaglandin J2-S-(R)-glutathione. It carries out the reaction prostaglandin J2 + glutathione = prostaglandin J2-S-(S)-glutathione. The catalysed reaction is prostaglandin A2 + glutathione = prostaglandin A2-S-(S)-glutathione. The enzyme catalyses 11(S)-hydroxy-14(S),15(S)-epoxy-(5Z,8Z,12E)-eicosatrienoate + glutathione = (11S,15S)-dihydroxy-14(R)-S-glutathionyl-(5Z,8Z,12E)-eicosatrienoate. Conjugation of reduced glutathione to a wide number of exogenous and endogenous hydrophobic electrophiles. Involved in the formation of glutathione conjugates of both prostaglandin A2 (PGA2) and prostaglandin J2 (PGJ2). Participates in the formation of novel hepoxilin regioisomers. Negatively regulates CDK5 activity via p25/p35 translocation to prevent neurodegeneration. This chain is Glutathione S-transferase P (GSTP1), found in Bos taurus (Bovine).